Consider the following 185-residue polypeptide: Ribosome-recycling factor (185 aa).

This sequence belongs to the RRF family.

It is found in the cytoplasm. Functionally, responsible for the release of ribosomes from messenger RNA at the termination of protein biosynthesis. May increase the efficiency of translation by recycling ribosomes from one round of translation to another. The polypeptide is Ribosome-recycling factor (Hamiltonella defensa subsp. Acyrthosiphon pisum (strain 5AT)).